Here is a 736-residue protein sequence, read N- to C-terminus: Polyribonucleotide nucleotidyltransferase (736 aa).

Residues Asp-488 and Asp-494 each coordinate Mg(2+). A KH domain is found at 555–614 (PMVQTLEIQKEKIRDVIGLGGKVIKELCKTFDVEIDISENGEVKVWGNVGENVKKAVQSI). The S1 motif domain maps to 624–692 (GDIFDGEVVK…HKNRVKLTLR (69 aa)).

The protein belongs to the polyribonucleotide nucleotidyltransferase family. Mg(2+) serves as cofactor.

Its subcellular location is the cytoplasm. It catalyses the reaction RNA(n+1) + phosphate = RNA(n) + a ribonucleoside 5'-diphosphate. Its function is as follows. Involved in mRNA degradation. Catalyzes the phosphorolysis of single-stranded polyribonucleotides processively in the 3'- to 5'-direction. This Orientia tsutsugamushi (strain Ikeda) (Rickettsia tsutsugamushi) protein is Polyribonucleotide nucleotidyltransferase.